The following is a 363-amino-acid chain: MYGLTRSLLFQLSAERAHRLGMAGLHYLGRSRDLCESLREKALEGAPPGLAVEVAGLRFAHPVALAAGLDKDAEAVDGLFACGFSAVEIGTLTPRPQPGNPSPRLFRLPEHRALINRMGFNNHGATQAAARLRMQTWRPGPLGVNIGKNKDTPLEQAVDDYVACVDALAPLGDYVVVNASSPNTPGLRKLQEPEQLGQLLGAVQERLATVAPGKPLFLKIAPDLSPEAVDEVVDVARAQKLAGLIATNTTVARPFEHPLAKEAGGLSGAPVREPANAVIRRAWLRSGGALPIIGVGGVFTAQDVYEKLRAGASVVQVYTGFIYEGPGMVGNILPTLATLLARDGYKQVRDVIGAEHRKPGAPN.

Residues alanine 67–lysine 71 and threonine 91 contribute to the FMN site. Lysine 71 contributes to the substrate binding site. Asparagine 116–phenylalanine 120 provides a ligand contact to substrate. Asparagine 145 and asparagine 178 together coordinate FMN. A substrate-binding site is contributed by asparagine 178. The Nucleophile role is filled by serine 181. Residue asparagine 183 coordinates substrate. The FMN site is built by lysine 219 and threonine 247. Asparagine 248–threonine 249 is a binding site for substrate. FMN contacts are provided by residues glycine 268, glycine 297, and tyrosine 318–threonine 319.

It belongs to the dihydroorotate dehydrogenase family. Type 2 subfamily. Monomer. FMN is required as a cofactor.

It localises to the cell membrane. The enzyme catalyses (S)-dihydroorotate + a quinone = orotate + a quinol. Its pathway is pyrimidine metabolism; UMP biosynthesis via de novo pathway; orotate from (S)-dihydroorotate (quinone route): step 1/1. Functionally, catalyzes the conversion of dihydroorotate to orotate with quinone as electron acceptor. The polypeptide is Dihydroorotate dehydrogenase (quinone) (Myxococcus xanthus (strain DK1622)).